Here is a 316-residue protein sequence, read N- to C-terminus: N-acetylmuramic acid 6-phosphate etherase (316 aa).

One can recognise an SIS domain in the interval 68–231; sequence ITDRLRSGGR…STCAMVRLGK (164 aa). The active-site Proton donor is Glu96. Glu127 is a catalytic residue.

This sequence belongs to the GCKR-like family. MurNAc-6-P etherase subfamily. Homodimer.

It catalyses the reaction N-acetyl-D-muramate 6-phosphate + H2O = N-acetyl-D-glucosamine 6-phosphate + (R)-lactate. It participates in amino-sugar metabolism; N-acetylmuramate degradation. Its function is as follows. Specifically catalyzes the cleavage of the D-lactyl ether substituent of MurNAc 6-phosphate, producing GlcNAc 6-phosphate and D-lactate. The polypeptide is N-acetylmuramic acid 6-phosphate etherase (Prochlorococcus marinus (strain MIT 9303)).